We begin with the raw amino-acid sequence, 596 residues long: Succinate dehydrogenase flavoprotein subunit (596 aa).

Residues 18 to 23, 41 to 56, and D225 each bind FAD; these read GAGGAG and TKLF…AQGG. H49 is modified (tele-8alpha-FAD histidine). Residues H246 and T258 each contribute to the substrate site. The active-site Proton acceptor is the R290. H357 provides a ligand contact to substrate. Residue E391 coordinates FAD. R402 is a substrate binding site. Residue 407–408 coordinates FAD; sequence SL.

Belongs to the FAD-dependent oxidoreductase 2 family. FRD/SDH subfamily. As to quaternary structure, part of an enzyme complex containing four subunits: a flavoprotein, an iron-sulfur, cytochrome b-556, and a hydrophobic anchor protein. It depends on FAD as a cofactor.

It is found in the cell inner membrane. The catalysed reaction is a quinone + succinate = fumarate + a quinol. The protein operates within carbohydrate metabolism; tricarboxylic acid cycle; fumarate from succinate (bacterial route): step 1/1. The sequence is that of Succinate dehydrogenase flavoprotein subunit (sdhA) from Rickettsia conorii (strain ATCC VR-613 / Malish 7).